Consider the following 205-residue polypeptide: Large ribosomal subunit protein bL9 (205 aa).

The segment at 160-205 is disordered; that stretch reads RDRKSRNAAAASEVQDAPVEDGGDEVVSVDSVAAEDGGADASGGTA. Positions 184–195 are enriched in low complexity; that stretch reads EVVSVDSVAAED.

It belongs to the bacterial ribosomal protein bL9 family.

Its function is as follows. Binds to the 23S rRNA. This chain is Large ribosomal subunit protein bL9, found in Anaplasma phagocytophilum (strain HZ).